The sequence spans 179 residues: ATP synthase subunit delta (179 aa).

The protein belongs to the ATPase delta chain family. F-type ATPases have 2 components, F(1) - the catalytic core - and F(0) - the membrane proton channel. F(1) has five subunits: alpha(3), beta(3), gamma(1), delta(1), epsilon(1). F(0) has three main subunits: a(1), b(2) and c(10-14). The alpha and beta chains form an alternating ring which encloses part of the gamma chain. F(1) is attached to F(0) by a central stalk formed by the gamma and epsilon chains, while a peripheral stalk is formed by the delta and b chains.

Its subcellular location is the cell membrane. In terms of biological role, f(1)F(0) ATP synthase produces ATP from ADP in the presence of a proton or sodium gradient. F-type ATPases consist of two structural domains, F(1) containing the extramembraneous catalytic core and F(0) containing the membrane proton channel, linked together by a central stalk and a peripheral stalk. During catalysis, ATP synthesis in the catalytic domain of F(1) is coupled via a rotary mechanism of the central stalk subunits to proton translocation. This protein is part of the stalk that links CF(0) to CF(1). It either transmits conformational changes from CF(0) to CF(1) or is implicated in proton conduction. The chain is ATP synthase subunit delta from Clostridium botulinum (strain Okra / Type B1).